A 356-amino-acid polypeptide reads, in one-letter code: Nicotinate-nucleotide--dimethylbenzimidazole phosphoribosyltransferase (356 aa).

The active-site Proton acceptor is E317.

Belongs to the CobT family. In terms of assembly, homodimer.

The catalysed reaction is 5,6-dimethylbenzimidazole + nicotinate beta-D-ribonucleotide = alpha-ribazole 5'-phosphate + nicotinate + H(+). It functions in the pathway nucleoside biosynthesis; alpha-ribazole biosynthesis; alpha-ribazole from 5,6-dimethylbenzimidazole: step 1/2. Its function is as follows. Catalyzes the synthesis of alpha-ribazole-5'-phosphate from nicotinate mononucleotide (NAMN) and 5,6-dimethylbenzimidazole (DMB). The chain is Nicotinate-nucleotide--dimethylbenzimidazole phosphoribosyltransferase from Salmonella typhi.